A 74-amino-acid chain; its full sequence is Arabinogalactan protein 20 (74 aa).

The signal sequence occupies residues 1–26 (MASRNSVAVIALFAFVFAVISPFAGA). Q27 bears the Pyrrolidone carboxylic acid mark. Residues P31, P33, and P35 each carry the 4-hydroxyproline modification. O-linked (Ara...) hydroxyproline glycosylation is found at P31, P33, and P35. S37 is lipidated: GPI-anchor amidated serine. Positions 38–74 (DGTSIDQGIAYLLMVVALVLTYLIHPLDASSSSYTFF) are cleaved as a propeptide — removed in mature form.

The protein belongs to the AG-peptide AGP family. In terms of processing, contains 4-hydroxyproline; hydroxylated on Pro-31, Pro-33 and Pro-35. Post-translationally, O-glycosylated on hydroxyprolines; noncontiguous hydroxylproline residues are glycosylated with arabinogalactan.

The protein localises to the cell membrane. Its function is as follows. Proteoglycan that seems to be implicated in diverse developmental roles such as differentiation, cell-cell recognition, embryogenesis and programmed cell death. The polypeptide is Arabinogalactan protein 20 (Arabidopsis thaliana (Mouse-ear cress)).